The following is a 643-amino-acid chain: Phosphomethylpyrimidine synthase (643 aa).

Residues asparagine 248, methionine 277, tyrosine 306, histidine 342, 362–364 (SRG), 403–406 (DGLR), and glutamate 442 each bind substrate. Residue histidine 446 coordinates Zn(2+). Tyrosine 469 is a binding site for substrate. Residue histidine 510 participates in Zn(2+) binding. 3 residues coordinate [4Fe-4S] cluster: cysteine 590, cysteine 593, and cysteine 598.

It belongs to the ThiC family. In terms of assembly, homodimer. The cofactor is [4Fe-4S] cluster.

The catalysed reaction is 5-amino-1-(5-phospho-beta-D-ribosyl)imidazole + S-adenosyl-L-methionine = 4-amino-2-methyl-5-(phosphooxymethyl)pyrimidine + CO + 5'-deoxyadenosine + formate + L-methionine + 3 H(+). The protein operates within cofactor biosynthesis; thiamine diphosphate biosynthesis. Its function is as follows. Catalyzes the synthesis of the hydroxymethylpyrimidine phosphate (HMP-P) moiety of thiamine from aminoimidazole ribotide (AIR) in a radical S-adenosyl-L-methionine (SAM)-dependent reaction. This Paraburkholderia phytofirmans (strain DSM 17436 / LMG 22146 / PsJN) (Burkholderia phytofirmans) protein is Phosphomethylpyrimidine synthase.